Here is a 181-residue protein sequence, read N- to C-terminus: MSMKKENTLDYSKITATLMETFNYKSVMQVPKVEKVVINMGVGDAIFNVKVLDDVVEELKLLSGQSPVITKAKKAISNFKLREGMPIGAKVTLRGARKEAFLCKLTRLVFPRVRDFRGISGKSFDGRGNYALGLKEQIVFPEINIDKVKKIRGMDIIIVTTAKNNTQAKKLLELYGMPFKN.

This sequence belongs to the universal ribosomal protein uL5 family. Part of the 50S ribosomal subunit; part of the 5S rRNA/L5/L18/L25 subcomplex. Contacts the 5S rRNA and the P site tRNA. Forms a bridge to the 30S subunit in the 70S ribosome.

Functionally, this is one of the proteins that bind and probably mediate the attachment of the 5S RNA into the large ribosomal subunit, where it forms part of the central protuberance. In the 70S ribosome it contacts protein S13 of the 30S subunit (bridge B1b), connecting the 2 subunits; this bridge is implicated in subunit movement. Contacts the P site tRNA; the 5S rRNA and some of its associated proteins might help stabilize positioning of ribosome-bound tRNAs. This chain is Large ribosomal subunit protein uL5, found in Onion yellows phytoplasma (strain OY-M).